Here is a 491-residue protein sequence, read N- to C-terminus: UDP-N-acetylmuramate--L-alanine ligase (491 aa).

Position 126–132 (Gly126–Thr132) interacts with ATP.

This sequence belongs to the MurCDEF family.

It is found in the cytoplasm. The enzyme catalyses UDP-N-acetyl-alpha-D-muramate + L-alanine + ATP = UDP-N-acetyl-alpha-D-muramoyl-L-alanine + ADP + phosphate + H(+). It participates in cell wall biogenesis; peptidoglycan biosynthesis. Its function is as follows. Cell wall formation. The protein is UDP-N-acetylmuramate--L-alanine ligase of Enterobacter sp. (strain 638).